The chain runs to 465 residues: Cysteine--tRNA ligase (465 aa).

C30 contributes to the Zn(2+) binding site. Positions 32–42 match the 'HIGH' region motif; that stretch reads ITVYDYCHIGH. C214, H239, and E243 together coordinate Zn(2+). The 'KMSKS' region motif lies at 271–275; sequence KMSKS. K274 lines the ATP pocket.

Belongs to the class-I aminoacyl-tRNA synthetase family. As to quaternary structure, monomer. It depends on Zn(2+) as a cofactor.

It localises to the cytoplasm. The catalysed reaction is tRNA(Cys) + L-cysteine + ATP = L-cysteinyl-tRNA(Cys) + AMP + diphosphate. The sequence is that of Cysteine--tRNA ligase from Burkholderia thailandensis (strain ATCC 700388 / DSM 13276 / CCUG 48851 / CIP 106301 / E264).